The chain runs to 215 residues: Cytochrome b6 (215 aa).

The chain crosses the membrane as a helical span at residues 32–52 (IFYCLGGITLTCFLVQVATGF). Cys-35 contacts heme c. Heme b-binding residues include His-86 and His-100. The next 3 helical transmembrane spans lie at 90–110 (ASMM…TGGF), 116–136 (LTWV…VTGY), and 186–206 (LHTF…FLMI). Residues His-187 and His-202 each coordinate heme b.

It belongs to the cytochrome b family. PetB subfamily. The 4 large subunits of the cytochrome b6-f complex are cytochrome b6, subunit IV (17 kDa polypeptide, PetD), cytochrome f and the Rieske protein, while the 4 small subunits are PetG, PetL, PetM and PetN. The complex functions as a dimer. Heme b is required as a cofactor. It depends on heme c as a cofactor.

It localises to the plastid. The protein resides in the chloroplast thylakoid membrane. Its function is as follows. Component of the cytochrome b6-f complex, which mediates electron transfer between photosystem II (PSII) and photosystem I (PSI), cyclic electron flow around PSI, and state transitions. The chain is Cytochrome b6 from Morus indica (Mulberry).